The following is a 499-amino-acid chain: Low-affinity inorganic phosphate transporter PitB (499 aa).

Helical transmembrane passes span 5–25 (FVGL…FVLF), 52–72 (LAVV…GLSV), 94–114 (LAMV…TWFF), 124–144 (LIGA…SSVM), 155–175 (IFSS…GLIF), 207–227 (PFWT…SHGA), 233–253 (GIGL…VVNM), 382–402 (APVW…MIGW), 430–450 (AAVS…THVL), and 473–493 (ILMA…GLYW).

This sequence belongs to the inorganic phosphate transporter (PiT) (TC 2.A.20) family. Pit subfamily.

The protein resides in the cell inner membrane. The enzyme catalyses phosphate(in) + H(+)(in) = phosphate(out) + H(+)(out). Low-affinity inorganic phosphate transporter. This chain is Low-affinity inorganic phosphate transporter PitB, found in Escherichia coli (strain K12).